Here is a 1196-residue protein sequence, read N- to C-terminus: Truncated transposon Ty1-A Gag-Pol polyprotein (1196 aa).

In terms of domain architecture, Integrase catalytic spans 101-276; the sequence is NSYEPFQYLH…AGLDISTLLP (176 aa). Positions 112 and 177 each coordinate Mg(2+). Disordered regions lie at residues 397-528, 533-552, and 571-628; these read SKAV…ETEK, RSPS…NIVP, and DLPL…DNET. Over residues 401 to 410 the composition is skewed to low complexity; it reads SPTDSTPPST. Residues 446 to 456 are compositionally biased toward polar residues; the sequence is STPQISNIEST. The segment covering 479-494 has biased composition (basic and acidic residues); sequence ESSHASKSKDFRHSDS. Composition is skewed to polar residues over residues 495–523 and 542–552; these read YSEN…QISD and PENNSSHNIVP. The Bipartite nuclear localization signal signature appears at 619-653; that stretch reads KKRSLEDNETEIKVSRDTWNTKNMRSLEPPRSKKR. One can recognise a Reverse transcriptase Ty1/copia-type domain in the interval 779-917; that stretch reads NNYYITQLDI…DILGLEIKYQ (139 aa). Positions 787, 868, 869, 1051, 1093, and 1126 each coordinate Mg(2+). Residues 1051–1193 form the RNase H Ty1/copia-type domain; it reads DASYGNQPYY…IKTFKLLTNK (143 aa).

Post-translationally, initially, virus-like particles (VLPs) are composed of the structural unprocessed proteins Gag and Gag-Pol, and also contain the host initiator methionine tRNA (tRNA(i)-Met) which serves as a primer for minus-strand DNA synthesis, and a dimer of genomic Ty RNA. Processing of the polyproteins occurs within the particle and proceeds by an ordered pathway, called maturation. First, the protease (PR) is released by autocatalytic cleavage of the Gag-Pol polyprotein yielding capsid protein p45 and a Pol-p154 precursor protein. This cleavage is a prerequisite for subsequent processing of Pol-p154 at the remaining sites to release the mature structural and catalytic proteins. Maturation takes place prior to the RT reaction and is required to produce transposition-competent VLPs.

The protein localises to the cytoplasm. The protein resides in the nucleus. It carries out the reaction DNA(n) + a 2'-deoxyribonucleoside 5'-triphosphate = DNA(n+1) + diphosphate. The catalysed reaction is Endonucleolytic cleavage to 5'-phosphomonoester.. In terms of biological role, reverse transcriptase/ribonuclease H (RT) is a multifunctional enzyme that catalyzes the conversion of the retro-elements RNA genome into dsDNA within the VLP. The enzyme displays a DNA polymerase activity that can copy either DNA or RNA templates, and a ribonuclease H (RNase H) activity that cleaves the RNA strand of RNA-DNA heteroduplexes during plus-strand synthesis and hydrolyzes RNA primers. The conversion leads to a linear dsDNA copy of the retrotransposon that includes long terminal repeats (LTRs) at both ends. Its function is as follows. Integrase (IN) targets the VLP to the nucleus, where a subparticle preintegration complex (PIC) containing at least integrase and the newly synthesized dsDNA copy of the retrotransposon must transit the nuclear membrane. Once in the nucleus, integrase performs the integration of the dsDNA into the host genome. This Saccharomyces cerevisiae (strain ATCC 204508 / S288c) (Baker's yeast) protein is Truncated transposon Ty1-A Gag-Pol polyprotein (TY1B-A).